The chain runs to 677 residues: Methionine--tRNA ligase (677 aa).

The short motif at 15–25 is the 'HIGH' region element; that stretch reads PYANGSIHLGH. 4 residues coordinate Zn(2+): cysteine 146, cysteine 149, cysteine 159, and cysteine 162. The short motif at 333–337 is the 'KMSKS' region element; sequence KMSKS. Position 336 (lysine 336) interacts with ATP. The tRNA-binding domain maps to 575–677; sequence DFAKVDLRVA…AGAKPGHQVK (103 aa).

The protein belongs to the class-I aminoacyl-tRNA synthetase family. MetG type 1 subfamily. As to quaternary structure, homodimer. It depends on Zn(2+) as a cofactor.

The protein localises to the cytoplasm. It catalyses the reaction tRNA(Met) + L-methionine + ATP = L-methionyl-tRNA(Met) + AMP + diphosphate. Its function is as follows. Is required not only for elongation of protein synthesis but also for the initiation of all mRNA translation through initiator tRNA(fMet) aminoacylation. In Escherichia coli (strain UTI89 / UPEC), this protein is Methionine--tRNA ligase.